The following is an 857-amino-acid chain: MSGRDSRGAGGGGGGHQPLSNAMGKLKEKLTRVGDELGYHRVESNLSTSNTATSLDTILPEDPFLFPQVSPQRHPQNTVRTQRLLEDEPPLSFRPLLEDDDINEPPTQQQQRTPLRASGSLELTPLPPPPTSLEIREHRDRQQRGAQGDDLQRSKQSLKGSRVSFERRDTGNSNTNSNKAAESSDEDSFEEKRTGFQQQKATSVDHKGILKDLKHILANDNRRQFQAKKHVSLDVKGTRFLQDLLKESSSEEEFHKTRREFQGRKHQSLDPRVTFKLDKVLQGSSTDSDEEGEDAEHKRLIHRPKDITKPVIIDLKDLESESDEDFLTSRQHFQQQRSISTDSRKSRRLYEMDEMGNKRGENIRHAVPFVRQITEDGKPKLEVYRPTTNPIYIWTQVLAALSVSLGSLVVGFVSAYTSPALVSMTDRNITSFEVTQDAGSWVGGIMPLAGLAGGIAGGPLIEYLGRRNTILATAVPFIVSSLLIACAVNVAMVLCGRFLAGFCVGIASLSLPVYLGETVQPEVRGTLGLLPTAFGNIGILLCFVAGSFMNWSMLAFLGAALPVPFLILMFLIPETPRWFVGRGLEERARKALKWLRGKEADVEPELKGLMRSQADADRQASRNTMLELFKRINLKPLSISLGLMFFQQFSGINAVIFYTVQIFKDAGSTIDSNLCTIIVGIVNFFATFMGILLIDRLGRKILLYISDIAMILTLSILGGFFYCKAHGPDVSHLGWLPLTCFVIYILGFSLGFGPIPWLMMGEILPAKIRGPAASVVTAFNWFCTFVVTKTFQDLTGAMGAHGAFWLFGAICFVGLFFVIIYVPETQGKTLEDIERKMMGRVRRMSSVANIKPLSFNM.

Disordered stretches follow at residues 1 to 28 (MSGRDSRGAGGGGGGHQPLSNAMGKLKE) and 62 to 203 (DPFL…KATS). At 1-392 (MSGRDSRGAG…VYRPTTNPIY (392 aa)) the chain is on the cytoplasmic side. Over residues 69-81 (VSPQRHPQNTVRT) the composition is skewed to polar residues. Over residues 134-143 (EIREHRDRQQ) the composition is skewed to basic and acidic residues. A compositionally biased stretch (polar residues) spans 171 to 181 (GNSNTNSNKAA). A phosphoserine mark is found at serine 248, serine 249, serine 250, serine 320, and serine 322. The tract at residues 327 to 346 (LTSRQHFQQQRSISTDSRKS) is disordered. The span at 330 to 341 (RQHFQQQRSIST) shows a compositional bias: polar residues. Residues 393 to 413 (IWTQVLAALSVSLGSLVVGFV) traverse the membrane as a helical segment. The Extracellular segment spans residues 414–440 (SAYTSPALVSMTDRNITSFEVTQDAGS). The N-linked (GlcNAc...) asparagine glycan is linked to asparagine 428. Residues 441–461 (WVGGIMPLAGLAGGIAGGPLI) traverse the membrane as a helical segment. The Cytoplasmic segment spans residues 462-473 (EYLGRRNTILAT). Residues 474–494 (AVPFIVSSLLIACAVNVAMVL) traverse the membrane as a helical segment. Topologically, residues 495 to 497 (CGR) are extracellular. The helical transmembrane segment at 498-518 (FLAGFCVGIASLSLPVYLGET) threads the bilayer. At 519–528 (VQPEVRGTLG) the chain is on the cytoplasmic side. A helical transmembrane segment spans residues 529–549 (LLPTAFGNIGILLCFVAGSFM). N-linked (GlcNAc...) asparagine glycosylation occurs at asparagine 550. The Extracellular segment spans residues 550 to 552 (NWS). Residues 553-573 (MLAFLGAALPVPFLILMFLIP) traverse the membrane as a helical segment. Over 574-636 (ETPRWFVGRG…ELFKRINLKP (63 aa)) the chain is Cytoplasmic. A helical membrane pass occupies residues 637–657 (LSISLGLMFFQQFSGINAVIF). Topologically, residues 658 to 673 (YTVQIFKDAGSTIDSN) are extracellular. Residues 674–694 (LCTIIVGIVNFFATFMGILLI) form a helical membrane-spanning segment. Residues 695–700 (DRLGRK) are Cytoplasmic-facing. Residues 701–721 (ILLYISDIAMILTLSILGGFF) form a helical membrane-spanning segment. Residues 722–740 (YCKAHGPDVSHLGWLPLTC) lie on the Extracellular side of the membrane. The helical transmembrane segment at 741 to 761 (FVIYILGFSLGFGPIPWLMMG) threads the bilayer. The Cytoplasmic segment spans residues 762-770 (EILPAKIRG). Residues 771-791 (PAASVVTAFNWFCTFVVTKTF) traverse the membrane as a helical segment. Residues 792–801 (QDLTGAMGAH) are Extracellular-facing. A helical membrane pass occupies residues 802–822 (GAFWLFGAICFVGLFFVIIYV). Topologically, residues 823–857 (PETQGKTLEDIERKMMGRVRRMSSVANIKPLSFNM) are cytoplasmic. Residues serine 845 and serine 846 each carry the phosphoserine modification.

Belongs to the major facilitator superfamily. Sugar transporter (TC 2.A.1.1) family. Trehalose transporter subfamily.

It is found in the cell membrane. Low-capacity facilitative transporter for trehalose. Does not transport maltose, sucrose or lactose. Mediates the bidirectional transfer of trehalose. Responsible for the transport of trehalose synthesized in the fat body and the incorporation of trehalose into other tissues that require a carbon source, thereby regulating trehalose levels in the hemolymph. This is Facilitated trehalose transporter Tret1-1 from Drosophila simulans (Fruit fly).